A 90-amino-acid chain; its full sequence is Protein S100-A6 (90 aa).

EF-hand domains are found at residues 12–47 (LIGI…IGSK) and 48–83 (LQDA…LAMI). Thr28 and Glu33 together coordinate Ca(2+). Lys40 is modified (N6-acetyllysine). Ser46 carries the post-translational modification Phosphoserine. N6-acetyllysine; alternate is present on Lys47. N6-succinyllysine; alternate is present on Lys47. Ca(2+)-binding residues include Asp61, Asn63, Asp65, Glu67, and Glu72.

The protein belongs to the S-100 family. Homodimer; head to tail assembly of 2 subunits. Interacts with CACYBP in a calcium-dependent manner. Interacts with ANXA2 and ANXA11 (via N-terminus). Interacts with SUGT1. Interacts with TP53; has higher affinity for TP53 that is phosphorylated on its N-terminal domain, and lower affinity for TP53 that is phosphorylated on its C-terminal domain. Interacts with tropomyosin. Interacts with FKBP4. Interacts with PPP5C (via TPR repeats); the interaction is calcium-dependent and modulates PPP5C activity. Interacts with TPPP; this interaction inhibits TPPP dimerization.

It is found in the nucleus envelope. The protein resides in the cytoplasm. Its subcellular location is the cell membrane. Its function is as follows. May function as calcium sensor and modulator, contributing to cellular calcium signaling. May function by interacting with other proteins, such as TPR-containing proteins, and indirectly play a role in many physiological processes such as the reorganization of the actin cytoskeleton and in cell motility. Binds 2 calcium ions. Calcium binding is cooperative. The chain is Protein S100-A6 (S100A6) from Oryctolagus cuniculus (Rabbit).